The primary structure comprises 176 residues: Ribosome maturation factor RimM (176 aa).

Residues 93–168 (DDEVYIEDIL…TIRITPPPGL (76 aa)) form the PRC barrel domain.

It belongs to the RimM family. Binds ribosomal protein uS19.

It localises to the cytoplasm. Functionally, an accessory protein needed during the final step in the assembly of 30S ribosomal subunit, possibly for assembly of the head region. Essential for efficient processing of 16S rRNA. May be needed both before and after RbfA during the maturation of 16S rRNA. It has affinity for free ribosomal 30S subunits but not for 70S ribosomes. This Oleidesulfovibrio alaskensis (strain ATCC BAA-1058 / DSM 17464 / G20) (Desulfovibrio alaskensis) protein is Ribosome maturation factor RimM.